The following is a 282-amino-acid chain: tRNA (guanine-N(7)-)-methyltransferase (282 aa).

The tract at residues 1–31 (MSLTDDQASKRQAYRAAKEANRKELKHVKID) is disordered. Residues 16-31 (AAKEANRKELKHVKID) show a composition bias toward basic and acidic residues. S-adenosyl-L-methionine-binding positions include G99, 122–123 (EI), 157–158 (NA), and C177. Residue D180 is part of the active site. Residue 255–257 (TEE) coordinates S-adenosyl-L-methionine.

The protein belongs to the class I-like SAM-binding methyltransferase superfamily. TrmB family. Forms a complex with TRM82.

The protein resides in the nucleus. The enzyme catalyses guanosine(46) in tRNA + S-adenosyl-L-methionine = N(7)-methylguanosine(46) in tRNA + S-adenosyl-L-homocysteine. The protein operates within tRNA modification; N(7)-methylguanine-tRNA biosynthesis. In terms of biological role, catalyzes the formation of N(7)-methylguanine at position 46 (m7G46) in tRNA. This Eremothecium gossypii (strain ATCC 10895 / CBS 109.51 / FGSC 9923 / NRRL Y-1056) (Yeast) protein is tRNA (guanine-N(7)-)-methyltransferase.